Here is a 686-residue protein sequence, read N- to C-terminus: ATP-dependent DNA helicase RecG (686 aa).

The interval 50-149 (TVIDLNQAED…GTQTQENADV (100 aa)) is wedge domain. Residues 279–439 (DLKAPIRMHR…VFGEMDVSSI (161 aa)) enclose the Helicase ATP-binding domain. ATP is bound at residue 292 to 299 (GDVGSGKT). A DEAH box motif is present at residues 392 to 395 (DEQH). The 157-residue stretch at 462–618 (VLMQMTSELK…GFELSERDLE (157 aa)) folds into the Helicase C-terminal domain.

It belongs to the helicase family. RecG subfamily. In terms of assembly, monomer.

It carries out the reaction Couples ATP hydrolysis with the unwinding of duplex DNA by translocating in the 3'-5' direction.. The catalysed reaction is ATP + H2O = ADP + phosphate + H(+). In terms of biological role, plays a critical role in recombination and DNA repair. Helps process Holliday junction intermediates to mature products by catalyzing branch migration. Has replication fork regression activity, unwinds stalled or blocked replication forks to make a HJ that can be resolved. Has a DNA unwinding activity characteristic of a DNA helicase with 3'-5' polarity. The polypeptide is ATP-dependent DNA helicase RecG (Staphylococcus aureus (strain NCTC 8325 / PS 47)).